The following is a 150-amino-acid chain: Large ribosomal subunit protein bL9 (150 aa).

Belongs to the bacterial ribosomal protein bL9 family.

Binds to the 23S rRNA. This chain is Large ribosomal subunit protein bL9, found in Pseudoalteromonas translucida (strain TAC 125).